A 309-amino-acid chain; its full sequence is MITIVGSGRVGTAAAAIMGIMRIDKKILLIDIVKGLPQGEALDLNHMSAILGLDVEYEGSNDYKDMAGSDLVIVTAGFPRKPGMTREQLVETNAKIVSDIGKEIKKYAPDSVVILTTNPLDAMTYVMWKSTGFPRERVIGFSGVLDAGRLAYYAAKKLGISPASILPIVLGQHGESMFPVPSKSFVHGVPLSKLLSEDQLREVVEETVKAGAKITELRGFSSNWGPGAGLAIMADSVKRDARRSLIASVVLKGEYGVFDLPVEVPIVLGKTGVVKVLEIELTPEEKEKFNQSVEAIRKLVGTIPQSYLQ.

NAD(+)-binding positions include 6 to 11 and aspartate 31; that span reads GSGRVG. Residues arginine 80 and arginine 86 each coordinate substrate. NAD(+) contacts are provided by residues asparagine 93 and 116–118; that span reads TTN. Residues asparagine 118 and arginine 149 each contribute to the substrate site. Catalysis depends on histidine 173, which acts as the Proton acceptor.

It belongs to the LDH/MDH superfamily.

It catalyses the reaction (S)-malate + NAD(+) = oxaloacetate + NADH + H(+). Catalyzes the reversible oxidation of malate to oxaloacetate. This Pyrobaculum calidifontis (strain DSM 21063 / JCM 11548 / VA1) protein is Malate dehydrogenase (mdh).